Reading from the N-terminus, the 93-residue chain is Zinc metalloproteinase-disintegrin-like leucurogin (93 aa).

One can recognise a Disintegrin domain in the interval 8–93 (PPVCGNELLE…SECPADVGHK (86 aa)). Ca(2+) contacts are provided by V10, N13, L15, E17, E20, and D23. 7 disulfides stabilise this stretch: C11–C40, C22–C35, C24–C30, C34–C57, C48–C54, C53–C79, and C66–C86. A D/ECD-tripeptide motif is present at residues 72–74 (ECD). Residues D74, P75, E77, D89, and V90 each contribute to the Ca(2+) site. The disordered stretch occupies residues 74–93 (DPAEHCTGQSSECPADVGHK).

This sequence belongs to the venom metalloproteinase (M12B) family. P-III subfamily. As to quaternary structure, monomer. Zn(2+) serves as cofactor. Post-translationally, N-glycosylated. Expressed by the venom gland.

It localises to the secreted. Snake venom zinc metalloprotease that possesses hemorrhagic activity. The disintegrin-like domain has been expressed and named leucurogin. This recombinant disintegrin is able to inhibit collagen-induced platelet aggregation but not ADP- or arachidonic acid-induced platelet aggregation. Furthermore, it inhibits the adhesion of human fibroblasts to collagen type I. It also reduces adhesion and migration of human fibroblasts and inhibits migration and proliferation of human and mouse melanoma cell lines (BLM, and B16-F10-Nex2). In vitro, it inhibits the vascular structures formation by endothelial cells. In addition, it inhibits the growth of experimental Ehrlich tumor and has anti-angiogenesis effect on the sponge implant model. In vivo, when intraperitoneally injected into mice, it inhibits lung metastasis of B16F10 Nex-2 cells. In the treatment of human melanoma, grafted intradermally in the nude mice flank, it inhibits tumor growth. The polypeptide is Zinc metalloproteinase-disintegrin-like leucurogin (Bothrops leucurus (Whitetail lancehead)).